Consider the following 750-residue polypeptide: Methylmalonyl-CoA mutase, mitochondrial (750 aa).

A mitochondrion-targeting transit peptide spans 1-32; that stretch reads MLRAKNQLFLLSPHYLKQVKESSGSRLIQQRL. Glutamine 50 lines the malonyl-CoA pocket. Lysine 89 carries the N6-acetyllysine modification. Malonyl-CoA is bound by residues 96 to 99 and 106 to 110; these read YPTM and TIRQY. N6-acetyllysine is present on lysine 212. Residues 216-218, arginine 228, lysine 255, histidine 265, and 304-306 each bind malonyl-CoA; these read TIQ and RLS. Lysine 335 carries the N6-acetyllysine modification. An N6-succinyllysine modification is found at lysine 343. Serine 481 is modified (phosphoserine). Lysine 595 is modified (N6-succinyllysine). Lysine 602 carries the post-translational modification N6-acetyllysine. Positions 614-746 constitute a B12-binding domain; it reads RPRLLVAKMG…DDIEKCLEKK (133 aa). Histidine 627 serves as a coordination point for adenosylcob(III)alamin.

The protein belongs to the methylmalonyl-CoA mutase family. Homodimer. Interacts (the apoenzyme form) with MMAA; the interaction is GTP dependent. The cofactor is adenosylcob(III)alamin.

Its subcellular location is the mitochondrion matrix. The protein resides in the mitochondrion. The protein localises to the cytoplasm. The enzyme catalyses (R)-methylmalonyl-CoA = succinyl-CoA. With respect to regulation, inhibited by itaconyl-CoA, a metabolite that inactivates the coenzyme B12 cofactor. Catalyzes the reversible isomerization of methylmalonyl-CoA (MMCoA) (generated from branched-chain amino acid metabolism and degradation of dietary odd chain fatty acids and cholesterol) to succinyl-CoA (3-carboxypropionyl-CoA), a key intermediate of the tricarboxylic acid cycle. In Pongo abelii (Sumatran orangutan), this protein is Methylmalonyl-CoA mutase, mitochondrial (MMUT).